The following is a 497-amino-acid chain: Proline--tRNA ligase (497 aa).

It belongs to the class-II aminoacyl-tRNA synthetase family. ProS type 3 subfamily. Homodimer.

Its subcellular location is the cytoplasm. It carries out the reaction tRNA(Pro) + L-proline + ATP = L-prolyl-tRNA(Pro) + AMP + diphosphate. Its function is as follows. Catalyzes the attachment of proline to tRNA(Pro) in a two-step reaction: proline is first activated by ATP to form Pro-AMP and then transferred to the acceptor end of tRNA(Pro). The protein is Proline--tRNA ligase of Deinococcus geothermalis (strain DSM 11300 / CIP 105573 / AG-3a).